The following is a 208-amino-acid chain: MNRKNIAKGKLVRRFGVNIFEQPKYDKLLKKKPNAPGMHGRSRRAKITEYGKQLIEKQKVKFTYGVSERQLTNIFKESRRQHGVTGDNLLALLERRIDNVVYRAGFAISRAHARQIVSHGIIMLNGRRVTIPSITLRANDMIQVKEKDRLKKLVRSNIEKTSTLRKLPTWIEVNADDLNVKITRPPSRDEIPTLANEQMIVEYYSKRA.

Residues 95-157 (RRIDNVVYRA…DRLKKLVRSN (63 aa)) enclose the S4 RNA-binding domain.

The protein belongs to the universal ribosomal protein uS4 family. In terms of assembly, part of the 30S ribosomal subunit. Contacts protein S5. The interaction surface between S4 and S5 is involved in control of translational fidelity.

Functionally, one of the primary rRNA binding proteins, it binds directly to 16S rRNA where it nucleates assembly of the body of the 30S subunit. Its function is as follows. With S5 and S12 plays an important role in translational accuracy. This Borrelia turicatae (strain 91E135) protein is Small ribosomal subunit protein uS4.